The chain runs to 121 residues: Large ribosomal subunit protein uL14c (121 aa).

This sequence belongs to the universal ribosomal protein uL14 family. In terms of assembly, part of the 50S ribosomal subunit.

Its subcellular location is the plastid. It localises to the chloroplast. Functionally, binds to 23S rRNA. This chain is Large ribosomal subunit protein uL14c, found in Emiliania huxleyi (Coccolithophore).